The sequence spans 616 residues: Adenylosuccinate synthetase 2 (616 aa).

Positions M1–N26 are disordered. A compositionally biased stretch (polar residues) spans P17–N26. GTP-binding positions include G87–K93 and G117–T119. D88 (proton acceptor) is an active-site residue. Residues D88 and G117 each contribute to the Mg(2+) site. IMP is bound by residues D88–K91, N115–H118, T202, K216, Q328, T343, and K472. H118 serves as the catalytic Proton donor. A468–R474 is a binding site for substrate. GTP contacts are provided by residues R474 and G603 to G605.

This sequence belongs to the adenylosuccinate synthetase family. In terms of assembly, homodimer. Mg(2+) serves as cofactor.

It is found in the cytoplasm. The catalysed reaction is IMP + L-aspartate + GTP = N(6)-(1,2-dicarboxyethyl)-AMP + GDP + phosphate + 2 H(+). It functions in the pathway purine metabolism; AMP biosynthesis via de novo pathway; AMP from IMP: step 1/2. Functionally, plays an important role in the salvage pathway for purine nucleotide biosynthesis. Catalyzes the first committed step in the biosynthesis of AMP from IMP. This is Adenylosuccinate synthetase 2 from Trypanosoma cruzi (strain CL Brener).